Consider the following 944-residue polypeptide: UvrABC system protein A (944 aa).

The ABC transporter 1 domain occupies 1 to 242 (MSKVDFLHIK…GKGIVKVENV (242 aa)). Residue 34–41 (GLSGSGKS) coordinates ATP. A C4-type; degenerate zinc finger spans residues 256–283 (CPKGDFEMPKIETRLFSFNSPYGMCQNC). ABC transporter domains are found at residues 359–597 (EEID…KYLS) and 610–935 (SGSG…EKSY). 643-650 (GVSGSGKS) contributes to the ATP binding site. The segment at 744–770 (CEKCSGDGSIKIEMFFLPNVYITCDHC) adopts a C4-type zinc-finger fold.

This sequence belongs to the ABC transporter superfamily. UvrA family. In terms of assembly, forms a heterotetramer with UvrB during the search for lesions.

Its subcellular location is the cytoplasm. The UvrABC repair system catalyzes the recognition and processing of DNA lesions. UvrA is an ATPase and a DNA-binding protein. A damage recognition complex composed of 2 UvrA and 2 UvrB subunits scans DNA for abnormalities. When the presence of a lesion has been verified by UvrB, the UvrA molecules dissociate. The chain is UvrABC system protein A from Mycoplasmopsis pulmonis (strain UAB CTIP) (Mycoplasma pulmonis).